A 695-amino-acid chain; its full sequence is Elongation factor G (695 aa).

The 276-residue stretch at 10 to 285 (AKTRNIGIMA…AVIDYLPSPI (276 aa)) folds into the tr-type G domain. GTP-binding positions include 19-26 (AHIDAGKT), 83-87 (DTPGH), and 137-140 (NKMD).

Belongs to the TRAFAC class translation factor GTPase superfamily. Classic translation factor GTPase family. EF-G/EF-2 subfamily.

Its subcellular location is the cytoplasm. Its function is as follows. Catalyzes the GTP-dependent ribosomal translocation step during translation elongation. During this step, the ribosome changes from the pre-translocational (PRE) to the post-translocational (POST) state as the newly formed A-site-bound peptidyl-tRNA and P-site-bound deacylated tRNA move to the P and E sites, respectively. Catalyzes the coordinated movement of the two tRNA molecules, the mRNA and conformational changes in the ribosome. This is Elongation factor G from Limosilactobacillus reuteri (strain DSM 20016) (Lactobacillus reuteri).